The sequence spans 380 residues: Queuine tRNA-ribosyltransferase (380 aa).

The Proton acceptor role is filled by Asp-96. Substrate contacts are provided by residues 96–100 (DSGGF), Asp-150, Gln-193, and Gly-220. The RNA binding stretch occupies residues 251 to 257 (GVGAPDS). The active-site Nucleophile is Asp-270. The tract at residues 275–279 (TRIAR) is RNA binding; important for wobble base 34 recognition. The Zn(2+) site is built by Cys-308, Cys-310, Cys-313, and His-339.

It belongs to the queuine tRNA-ribosyltransferase family. In terms of assembly, homodimer. Within each dimer, one monomer is responsible for RNA recognition and catalysis, while the other monomer binds to the replacement base PreQ1. It depends on Zn(2+) as a cofactor.

The enzyme catalyses 7-aminomethyl-7-carbaguanine + guanosine(34) in tRNA = 7-aminomethyl-7-carbaguanosine(34) in tRNA + guanine. It functions in the pathway tRNA modification; tRNA-queuosine biosynthesis. Functionally, catalyzes the base-exchange of a guanine (G) residue with the queuine precursor 7-aminomethyl-7-deazaguanine (PreQ1) at position 34 (anticodon wobble position) in tRNAs with GU(N) anticodons (tRNA-Asp, -Asn, -His and -Tyr). Catalysis occurs through a double-displacement mechanism. The nucleophile active site attacks the C1' of nucleotide 34 to detach the guanine base from the RNA, forming a covalent enzyme-RNA intermediate. The proton acceptor active site deprotonates the incoming PreQ1, allowing a nucleophilic attack on the C1' of the ribose to form the product. After dissociation, two additional enzymatic reactions on the tRNA convert PreQ1 to queuine (Q), resulting in the hypermodified nucleoside queuosine (7-(((4,5-cis-dihydroxy-2-cyclopenten-1-yl)amino)methyl)-7-deazaguanosine). This Streptococcus equi subsp. equi (strain 4047) protein is Queuine tRNA-ribosyltransferase.